The following is a 259-amino-acid chain: uncharacterized protein (259 aa).

The signal sequence occupies residues 1–22 (MKHSKKLLLCISFLLITFFISG). Residue cysteine 23 is the site of N-palmitoyl cysteine attachment. Cysteine 23 is lipidated: S-diacylglycerol cysteine.

It belongs to the staphylococcal tandem lipoprotein family.

It is found in the cell membrane. This is an uncharacterized protein from Staphylococcus epidermidis (strain ATCC 35984 / DSM 28319 / BCRC 17069 / CCUG 31568 / BM 3577 / RP62A).